A 502-amino-acid chain; its full sequence is Cysteine protease RavZ (502 aa).

2 consecutive short sequence motifs (LIR) follow at residues 9 to 23 (DKLI…GEQE) and 23 to 37 (ESDI…GDEK). The catalytic region stretch occupies residues 49 to 325 (SIYPPETSWE…ESALTEGKTL (277 aa)). Catalysis depends on residues histidine 176 and aspartate 197. The interval 211-217 (YFKGKYR) is alpha-3 helix. The active site involves cysteine 258. The interval 326 to 431 (PVQLSEFIVA…VLPCVKFDDT (106 aa)) is membrane targeting region. The LIR 3 motif lies at 429–443 (DDTIDDFVTIEKDEL).

It localises to the secreted. It is found in the host cytoplasmic vesicle membrane. The catalysed reaction is [protein]-C-terminal L-amino acid-glycyl-phosphatidylethanolamide + H2O = a 1,2-diacyl-sn-glycero-3-phosphoethanolamine-N-glycine + [protein]-C-terminal &lt;stereo&gt;L-&lt;/stereo&gt;amino acid. It catalyses the reaction [protein]-C-terminal L-amino acid-glycyl-phosphatidylserine + H2O = 1,2-diacyl-sn-glycero-3-phospho-L-serine-N-glycine + [protein]-C-terminal &lt;stereo&gt;L-&lt;/stereo&gt;amino acid. Its function is as follows. Cysteine protease effector that inhibits host cell autophagy by targeting lipid-conjugated ATG8 family proteins on pre-autophagosomal structures. Specifically hydrolyzes the amide bond between the C-terminal glycine residue and an adjacent aromatic residue in ATG8 proteins conjugated to phosphatidylethanolamine (PE), producing an ATG8 protein that cannot be reconjugated by host ATG7 and ATG3. Mechanistically, Ravz interacts with ATG8 proteins conjugated to PE via its LIR motifs, extracts them from the membrane of autophagosomes and integrates the PE part into its own lipid-binding site. It then removes the lipid component of the ATG8 protein. Also able to mediate delipidation of ATG8 proteins conjugated to phosphatidylserine (PS) during non-canonical autophagy. Inhibits host ubiquitin recruitment to bacteria-containing vacuoles, suggesting that it is able to mediate delipidation of other proteins in addition to ATG8 proteins. It is however not involved in the exclusion of autophagy adapters from bacteria-containing vacuoles decorated with ubiquitin. The polypeptide is Cysteine protease RavZ (Legionella pneumophila subsp. pneumophila (strain Philadelphia 1 / ATCC 33152 / DSM 7513)).